Reading from the N-terminus, the 150-residue chain is UPF0336 protein SAV_4901 (150 aa).

Positions 8–126 constitute a MaoC-like domain; it reads VGRSYPPTDP…GNDVVDVRGE (119 aa).

This sequence belongs to the UPF0336 family.

This Streptomyces avermitilis (strain ATCC 31267 / DSM 46492 / JCM 5070 / NBRC 14893 / NCIMB 12804 / NRRL 8165 / MA-4680) protein is UPF0336 protein SAV_4901.